We begin with the raw amino-acid sequence, 385 residues long: Actin-2 (385 aa).

This sequence belongs to the actin family. ARP1 subfamily.

The protein localises to the cytoplasm. Its subcellular location is the cytoskeleton. In Pneumocystis carinii, this protein is Actin-2.